Reading from the N-terminus, the 1605-residue chain is Pentafunctional AROM polypeptide (1605 aa).

The 3-dehydroquinate synthase stretch occupies residues 1–384; the sequence is MTGPTKISIL…YEPRASVVPN (384 aa). NAD(+)-binding positions include 44 to 46, 81 to 84, 114 to 116, and aspartate 119; these read DTN, EVSK, and GGV. Arginine 130 serves as a coordination point for 7-phospho-2-dehydro-3-deoxy-D-arabino-heptonate. Position 139–140 (139–140) interacts with NAD(+); sequence TT. 7-phospho-2-dehydro-3-deoxy-D-arabino-heptonate contacts are provided by aspartate 146 and lysine 152. Lysine 161 lines the NAD(+) pocket. Asparagine 162 serves as a coordination point for 7-phospho-2-dehydro-3-deoxy-D-arabino-heptonate. NAD(+) is bound by residues 179–182 and asparagine 190; that span reads FLET. Glutamate 194 contributes to the Zn(2+) binding site. Residues 194–197 and lysine 250 each bind 7-phospho-2-dehydro-3-deoxy-D-arabino-heptonate; that span reads EVIK. The active-site Proton acceptor; for 3-dehydroquinate synthase activity is the glutamate 260. Residues 264 to 268 and histidine 271 contribute to the 7-phospho-2-dehydro-3-deoxy-D-arabino-heptonate site; that span reads RNLLN. Histidine 271 contributes to the Zn(2+) binding site. Residue histidine 275 is the Proton acceptor; for 3-dehydroquinate synthase activity of the active site. The 7-phospho-2-dehydro-3-deoxy-D-arabino-heptonate site is built by histidine 287 and lysine 356. Zn(2+) is bound at residue histidine 287. Residues 397 to 842 form an EPSP synthase region; it reads VHPGVSTTSE…WDTLRQKFAV (446 aa). The active-site For EPSP synthase activity is cysteine 824. The interval 864–1055 is shikimate kinase; it reads SASVFIIGMR…KKKQHSFFVS (192 aa). An ATP-binding site is contributed by 871–878; it reads GMRGAGKT. The 3-dehydroquinase stretch occupies residues 1056 to 1276; that stretch reads LTLPDVRGAD…AAPGQLSATD (221 aa). Histidine 1179 serves as the catalytic Proton acceptor; for 3-dehydroquinate dehydratase activity. Lysine 1207 (schiff-base intermediate with substrate; for 3-dehydroquinate dehydratase activity) is an active-site residue. The shikimate dehydrogenase stretch occupies residues 1289 to 1605; that stretch reads KKRFALFGSP…LSGRTMLTCS (317 aa).

This sequence in the N-terminal section; belongs to the sugar phosphate cyclases superfamily. Dehydroquinate synthase family. It in the 2nd section; belongs to the EPSP synthase family. The protein in the 3rd section; belongs to the shikimate kinase family. In the 4th section; belongs to the type-I 3-dehydroquinase family. This sequence in the C-terminal section; belongs to the shikimate dehydrogenase family. As to quaternary structure, homodimer. The cofactor is Zn(2+).

It is found in the cytoplasm. The catalysed reaction is 7-phospho-2-dehydro-3-deoxy-D-arabino-heptonate = 3-dehydroquinate + phosphate. It carries out the reaction 3-dehydroquinate = 3-dehydroshikimate + H2O. It catalyses the reaction shikimate + NADP(+) = 3-dehydroshikimate + NADPH + H(+). The enzyme catalyses shikimate + ATP = 3-phosphoshikimate + ADP + H(+). The catalysed reaction is 3-phosphoshikimate + phosphoenolpyruvate = 5-O-(1-carboxyvinyl)-3-phosphoshikimate + phosphate. The protein operates within metabolic intermediate biosynthesis; chorismate biosynthesis; chorismate from D-erythrose 4-phosphate and phosphoenolpyruvate: step 2/7. It functions in the pathway metabolic intermediate biosynthesis; chorismate biosynthesis; chorismate from D-erythrose 4-phosphate and phosphoenolpyruvate: step 3/7. It participates in metabolic intermediate biosynthesis; chorismate biosynthesis; chorismate from D-erythrose 4-phosphate and phosphoenolpyruvate: step 4/7. Its pathway is metabolic intermediate biosynthesis; chorismate biosynthesis; chorismate from D-erythrose 4-phosphate and phosphoenolpyruvate: step 5/7. The protein operates within metabolic intermediate biosynthesis; chorismate biosynthesis; chorismate from D-erythrose 4-phosphate and phosphoenolpyruvate: step 6/7. The AROM polypeptide catalyzes 5 consecutive enzymatic reactions in prechorismate polyaromatic amino acid biosynthesis. This is Pentafunctional AROM polypeptide from Aspergillus fumigatus (strain CBS 144.89 / FGSC A1163 / CEA10) (Neosartorya fumigata).